We begin with the raw amino-acid sequence, 148 residues long: UPF0178 protein Pcar_2632 (148 aa).

This sequence belongs to the UPF0178 family.

The protein is UPF0178 protein Pcar_2632 of Syntrophotalea carbinolica (strain DSM 2380 / NBRC 103641 / GraBd1) (Pelobacter carbinolicus).